A 590-amino-acid chain; its full sequence is Aspartate--tRNA(Asp/Asn) ligase (590 aa).

An L-aspartate-binding site is contributed by Glu173. Residues 197–200 are aspartate; it reads QIFK. Arg219 is a binding site for L-aspartate. Residues 219–221 and Gln228 contribute to the ATP site; that span reads RDE. Position 450 (His450) interacts with L-aspartate. Glu484 serves as a coordination point for ATP. Arg491 serves as a coordination point for L-aspartate. An ATP-binding site is contributed by 536–539; that stretch reads GLDR.

Belongs to the class-II aminoacyl-tRNA synthetase family. Type 1 subfamily. As to quaternary structure, homodimer.

It localises to the cytoplasm. It carries out the reaction tRNA(Asx) + L-aspartate + ATP = L-aspartyl-tRNA(Asx) + AMP + diphosphate. Its function is as follows. Aspartyl-tRNA synthetase with relaxed tRNA specificity since it is able to aspartylate not only its cognate tRNA(Asp) but also tRNA(Asn). Reaction proceeds in two steps: L-aspartate is first activated by ATP to form Asp-AMP and then transferred to the acceptor end of tRNA(Asp/Asn). This is Aspartate--tRNA(Asp/Asn) ligase from Coxiella burnetii (strain Dugway 5J108-111).